Here is a 500-residue protein sequence, read N- to C-terminus: Glucokinase-1 (500 aa).

Ser-2 is subject to N-acetylserine. At Ser-2 the chain carries Phosphoserine. The 487-residue stretch at 12–498 (RAVIQAVDQI…SGVGAALCAL (487 aa)) folds into the Hexokinase domain. The segment at 74-216 (NGTERGVLLA…MPMIKVVALT (143 aa)) is hexokinase small subdomain. ATP is bound at residue Lys-110. The glucose-binding stretch occupies residues 158–184 (KLGFTFSYPVDQTSLNSGTLIRWTKGF). The tract at residues 217 to 487 (NDTVGTYLSH…RKVHLKIAKD (271 aa)) is hexokinase large subdomain. A Phosphoserine modification is found at Ser-470. 487–492 (DGSGVG) serves as a coordination point for ATP.

The protein belongs to the hexokinase family. Monomer.

The enzyme catalyses D-glucose + ATP = D-glucose 6-phosphate + ADP + H(+). It functions in the pathway carbohydrate metabolism; hexose metabolism. The protein operates within carbohydrate degradation; glycolysis; D-glyceraldehyde 3-phosphate and glycerone phosphate from D-glucose: step 1/4. Its function is as follows. Two isoenzymes, hexokinase-1 and hexokinase-2, can phosphorylate keto- and aldohexoses in yeast, whereas a third isoenzyme, GLK, is specific for aldohexoses. All glucose phosphorylating enzymes are involved in glucose uptake. The polypeptide is Glucokinase-1 (GLK1) (Saccharomyces cerevisiae (strain ATCC 204508 / S288c) (Baker's yeast)).